The following is a 151-amino-acid chain: Group 10 secretory phospholipase A2 (151 aa).

Positions 1–17 (MLLLLLLLLLGPGSCLS) are cleaved as a signal peptide. Positions 18–28 (EATRRSHVYKR) are excised as a propeptide. 8 disulfides stabilise this stretch: C39–C97, C53–C143, C55–C71, C70–C125, C76–C150, C77–C118, C86–C111, and C104–C116. Ca(2+) is bound by residues Y54, G56, and G58. The active site involves H74. Ca(2+) is bound at residue D75. Residue D119 is part of the active site.

This sequence belongs to the phospholipase A2 family. In terms of assembly, interacts with PLA2R1; this interaction mediates PLA2G10 clearance and inactivation. Requires Ca(2+) as cofactor.

It is found in the secreted. It localises to the lysosome. The protein resides in the cytoplasmic vesicle. Its subcellular location is the secretory vesicle. The protein localises to the acrosome. It catalyses the reaction a 1,2-diacyl-sn-glycero-3-phosphocholine + H2O = a 1-acyl-sn-glycero-3-phosphocholine + a fatty acid + H(+). It carries out the reaction 1-hexadecanoyl-2-(9Z-octadecenoyl)-sn-glycero-3-phosphocholine + H2O = 1-hexadecanoyl-sn-glycero-3-phosphocholine + (9Z)-octadecenoate + H(+). The catalysed reaction is 1-octadecanoyl-2-(5Z,8Z,11Z,14Z-eicosatetraenoyl)-sn-glycero-3-phosphocholine + H2O = 1-octadecanoyl-sn-glycero-3-phosphocholine + (5Z,8Z,11Z,14Z)-eicosatetraenoate + H(+). The enzyme catalyses 1,2-dihexadecanoyl-sn-glycero-3-phosphocholine + H2O = 1-hexadecanoyl-sn-glycero-3-phosphocholine + hexadecanoate + H(+). It catalyses the reaction 1-hexadecanoyl-2-(9Z-octadecenoyl)-sn-glycero-3-phosphoglycerol + H2O = 1-hexadecanoyl-sn-glycero-3-phosphoglycerol + (9Z)-octadecenoate + H(+). It carries out the reaction 1,2-dihexadecanoyl-sn-glycero-3-phospho-(1'-sn-glycerol) + H2O = 1-hexadecanoyl-sn-glycero-3-phospho-(1'-sn-glycerol) + hexadecanoate + H(+). The catalysed reaction is 1-hexadecanoyl-2-(9Z-octadecenoyl)-sn-glycero-3-phospho-L-serine + H2O = 1-hexadecanoyl-sn-glycero-3-phospho-L-serine + (9Z)-octadecenoate + H(+). The enzyme catalyses 1-hexadecanoyl-2-(9Z,12Z-octadecadienoyl)-sn-glycero-3-phosphoethanolamine + H2O = 1-hexadecanoyl-sn-glycero-3-phosphoethanolamine + (9Z,12Z)-octadecadienoate + H(+). It catalyses the reaction 1-hexadecanoyl-2-(9Z-octadecenoyl)-sn-glycero-3-phosphate + H2O = 1-hexadecanoyl-sn-glycero-3-phosphate + (9Z)-octadecenoate + H(+). It carries out the reaction 1-O-hexadecyl-2-acetyl-sn-glycero-3-phosphocholine + H2O = 1-O-hexadecyl-sn-glycero-3-phosphocholine + acetate + H(+). Secretory calcium-dependent phospholipase A2 that primarily targets extracellular phospholipids. Hydrolyzes the ester bond of the fatty acyl group attached at sn-2 position of phospholipids with preference for phosphatidylcholines and phosphatidylglycerols over phosphatidylethanolamines. Preferentially releases sn-2 omega-6 and omega-3 polyunsaturated fatty acyl (PUFA) chains over saturated fatty acyls. Contributes to phospholipid remodeling of very low-density lipoprotein (VLDL), low-density lipoprotein (LDL) and high-density lipoprotein (HDL) particles. Hydrolyzes LDL phospholipids releasing unsaturated fatty acids that regulate macrophage differentiation toward foam cells. Efficiently hydrolyzes and inactivates platelet activating factor (PAF), a potent lipid mediator present in oxidized LDL. May act in an autocrine and paracrine manner. Secreted by lung epithelium, targets membrane phospholipids of infiltrating eosinophils, releasing arachidonate and boosting eicosanoid and cysteinyl leukotriene synthesis involved in airway inflammatory response. Secreted by gut epithelium, hydrolyzes dietary and biliary phosphatidylcholines in the gastrointestinal lumen. Plays a stem cell regulator role in colon epithelium. Within intracellular compartment, mediates Paneth-like cell differentiation and its stem cell supporting functions by inhibiting the Wnt signaling pathway in intestinal stem cell (ISC). Secreted in the intestinal lumen upon inflammation, acts in an autocrine way and promotes prostaglandin E2 synthesis that stimulates Wnt signaling pathway in ISCs and tissue regeneration. May participate in hair follicle morphogenesis by regulating phosphatidylethanolamines metabolism at the outermost epithelial layer and facilitating melanin synthesis. By releasing lysophosphatidylcholines (LPCs) at sperm acrosome, controls sperm cell capacitation, acrosome reaction and overall fertility. May promote neurite outgrowth in neuron fibers involved in nociception. Contributes to lipid remodeling of cellular membranes and generation of lipid mediators involved in pathogen clearance. Cleaves sn-2 fatty acyl chains of phosphatidylglycerols and phosphatidylethanolamines, which are major components of membrane phospholipids in bacteria. Displays bactericidal activity against Gram-positive bacteria by directly hydrolyzing phospholipids of the bacterial membrane. In pulmonary epithelium, may contribute to host defense response against adenoviral infection. Prevents adenovirus entry into host cells by hydrolyzing host cell plasma membrane, releasing C16:0 LPCs that inhibit virus-mediated membrane fusion and viral infection. Likely prevents adenoviral entry into the endosomes of host cells. May play a role in maturation and activation of innate immune cells including macrophages, group 2 innate lymphoid cells and mast cells. The chain is Group 10 secretory phospholipase A2 (Pla2g10) from Rattus norvegicus (Rat).